Reading from the N-terminus, the 237-residue chain is CD209 antigen-like protein D (237 aa).

Topologically, residues 1–54 (MSDSMESKTQQVVIPEDEECLMSGTRYSDISSRLQTKFGIKSLAEYTKQSRNPL) are cytoplasmic. A helical; Signal-anchor for type II membrane protein transmembrane segment spans residues 55 to 75 (VLQLLSFLFLAGLLLIILILV). Over 76 to 237 (SKVPSSEVQN…KVSTSSCTTK (162 aa)) the chain is Extracellular. A disulfide bond links Cys-106 and Cys-117. The C-type lectin domain occupies 112-227 (FFNGSCYFFS…CDKLLFWICK (116 aa)). Residues Asn-114 and Asn-129 are each glycosylated (N-linked (GlcNAc...) asparagine). Intrachain disulfides connect Cys-134/Cys-226 and Cys-205/Cys-218. Ca(2+) is bound by residues Glu-196, Asn-198, Glu-203, Asn-214, and Asp-215.

The protein localises to the membrane. Probable pathogen-recognition receptor. May mediate the endocytosis of pathogens which are subsequently degraded in lysosomal compartments. May recognize in a calcium-dependent manner high mannose N-linked oligosaccharides in a variety of pathogen antigens. This is CD209 antigen-like protein D (Cd209d) from Mus musculus (Mouse).